A 257-amino-acid polypeptide reads, in one-letter code: Transcription factor MYB3 (257 aa).

HTH myb-type domains lie at Lys-9–Leu-61 and Arg-62–Leu-116. DNA-binding regions (H-T-H motif) lie at residues Trp-37–Leu-61 and Trp-89–Ile-112. The Required for interaction with CPL1 signature appears at Leu-189–Leu-193.

In terms of assembly, interacts with CPL1. Expressed in roots, stems, leaves, flowers and siliques.

It is found in the nucleus. In Arabidopsis thaliana (Mouse-ear cress), this protein is Transcription factor MYB3 (MYB3).